We begin with the raw amino-acid sequence, 192 residues long: Probable GTP-binding protein EngB (192 aa).

The 171-residue stretch at 22–192 (QLPEIVFVGR…LLEQLAIYTG (171 aa)) folds into the EngB-type G domain. Residues 30–37 (GRSNVGKS), 57–61 (GKTQL), 75–78 (DLPG), 142–145 (TKYD), and 172–174 (YSA) contribute to the GTP site. Residues Ser37 and Thr59 each coordinate Mg(2+).

Belongs to the TRAFAC class TrmE-Era-EngA-EngB-Septin-like GTPase superfamily. EngB GTPase family. It depends on Mg(2+) as a cofactor.

Necessary for normal cell division and for the maintenance of normal septation. The chain is Probable GTP-binding protein EngB from Chlorobium phaeobacteroides (strain BS1).